Consider the following 154-residue polypeptide: AP-1 complex subunit sigma-3 (154 aa).

The protein belongs to the adaptor complexes small subunit family. Adaptor protein complex 1 (AP-1) is a heterotetramer composed of two large adaptins (gamma-type subunit AP1G1 and beta-type subunit AP1B1), a medium adaptin (mu-type subunit AP1M1 or AP1M2) and a small adaptin (sigma-type subunit AP1S1 or AP1S2 or AP1S3). In terms of tissue distribution, widely expressed.

The protein resides in the golgi apparatus. The protein localises to the cytoplasmic vesicle membrane. It is found in the membrane. Its subcellular location is the clathrin-coated pit. Functionally, subunit of clathrin-associated adaptor protein complex 1 that plays a role in protein sorting in the late-Golgi/trans-Golgi network (TGN) and/or endosomes. The AP complexes mediate both the recruitment of clathrin to membranes and the recognition of sorting signals within the cytosolic tails of transmembrane cargo molecules. Involved in TLR3 trafficking. The polypeptide is AP-1 complex subunit sigma-3 (AP1S3) (Homo sapiens (Human)).